Reading from the N-terminus, the 398-residue chain is 1-deoxy-D-xylulose 5-phosphate reductoisomerase (398 aa).

Positions 10, 11, 12, 13, 36, 38, and 124 each coordinate NADPH. Residue Lys-125 coordinates 1-deoxy-D-xylulose 5-phosphate. Glu-126 contacts NADPH. A Mn(2+)-binding site is contributed by Asp-150. 1-deoxy-D-xylulose 5-phosphate contacts are provided by Ser-151, Glu-152, Ser-176, and His-199. Glu-152 contacts Mn(2+). Gly-205 provides a ligand contact to NADPH. Positions 212, 217, 218, and 221 each coordinate 1-deoxy-D-xylulose 5-phosphate. Position 221 (Glu-221) interacts with Mn(2+).

This sequence belongs to the DXR family. It depends on Mg(2+) as a cofactor. Mn(2+) serves as cofactor.

It carries out the reaction 2-C-methyl-D-erythritol 4-phosphate + NADP(+) = 1-deoxy-D-xylulose 5-phosphate + NADPH + H(+). It participates in isoprenoid biosynthesis; isopentenyl diphosphate biosynthesis via DXP pathway; isopentenyl diphosphate from 1-deoxy-D-xylulose 5-phosphate: step 1/6. Functionally, catalyzes the NADPH-dependent rearrangement and reduction of 1-deoxy-D-xylulose-5-phosphate (DXP) to 2-C-methyl-D-erythritol 4-phosphate (MEP). This is 1-deoxy-D-xylulose 5-phosphate reductoisomerase from Nostoc punctiforme (strain ATCC 29133 / PCC 73102).